The primary structure comprises 493 residues: Cobyric acid synthase (493 aa).

The GATase cobBQ-type domain occupies 252 to 441; it reads DLKITVIRLP…LHGLLENGPW (190 aa). Cys333 functions as the Nucleophile in the catalytic mechanism. His433 is a catalytic residue.

Belongs to the CobB/CobQ family. CobQ subfamily.

Its pathway is cofactor biosynthesis; adenosylcobalamin biosynthesis. Catalyzes amidations at positions B, D, E, and G on adenosylcobyrinic A,C-diamide. NH(2) groups are provided by glutamine, and one molecule of ATP is hydrogenolyzed for each amidation. The chain is Cobyric acid synthase from Thermosynechococcus vestitus (strain NIES-2133 / IAM M-273 / BP-1).